A 417-amino-acid chain; its full sequence is NADH-quinone oxidoreductase subunit D (417 aa).

Belongs to the complex I 49 kDa subunit family. In terms of assembly, NDH-1 is composed of 14 different subunits. Subunits NuoB, C, D, E, F, and G constitute the peripheral sector of the complex.

The protein localises to the cell inner membrane. It carries out the reaction a quinone + NADH + 5 H(+)(in) = a quinol + NAD(+) + 4 H(+)(out). Its function is as follows. NDH-1 shuttles electrons from NADH, via FMN and iron-sulfur (Fe-S) centers, to quinones in the respiratory chain. The immediate electron acceptor for the enzyme in this species is believed to be ubiquinone. Couples the redox reaction to proton translocation (for every two electrons transferred, four hydrogen ions are translocated across the cytoplasmic membrane), and thus conserves the redox energy in a proton gradient. This chain is NADH-quinone oxidoreductase subunit D, found in Verminephrobacter eiseniae (strain EF01-2).